The chain runs to 428 residues: Probable anion transporter 6 (428 aa).

Residues 1–22 (MKFPKRYAIVLLTFMCTNVCYI) form the signal peptide. 11 consecutive transmembrane segments (helical) span residues 47 to 67 (MILS…GWAA), 74 to 94 (LVLL…PLDP), 98 to 118 (ILLV…FPSI), 137 to 157 (LTTS…PSLV), 164 to 184 (SVFS…FKFA), 221 to 241 (ILFS…HYAL), 269 to 289 (LPYL…DHLI), 301 to 321 (KLLN…LPLF), 327 to 347 (AIFC…GFAV), 356 to 376 (FAGI…IVGV), and 401 to 421 (TVFF…LIFS).

The protein belongs to the major facilitator superfamily. Sodium/anion cotransporter (TC 2.A.1.14) family.

It localises to the cell membrane. Probable anion transporter. This chain is Probable anion transporter 6 (PHT4;6), found in Oryza sativa subsp. japonica (Rice).